The chain runs to 237 residues: Sugar fermentation stimulation protein homolog (237 aa).

Belongs to the SfsA family.

In Synechocystis sp. (strain ATCC 27184 / PCC 6803 / Kazusa), this protein is Sugar fermentation stimulation protein homolog.